We begin with the raw amino-acid sequence, 884 residues long: Alanine--tRNA ligase (884 aa).

Residues H572, H576, C673, and H677 each contribute to the Zn(2+) site.

The protein belongs to the class-II aminoacyl-tRNA synthetase family. It depends on Zn(2+) as a cofactor.

It localises to the cytoplasm. The enzyme catalyses tRNA(Ala) + L-alanine + ATP = L-alanyl-tRNA(Ala) + AMP + diphosphate. Its function is as follows. Catalyzes the attachment of alanine to tRNA(Ala) in a two-step reaction: alanine is first activated by ATP to form Ala-AMP and then transferred to the acceptor end of tRNA(Ala). Also edits incorrectly charged Ser-tRNA(Ala) and Gly-tRNA(Ala) via its editing domain. This is Alanine--tRNA ligase from Xylella fastidiosa (strain M23).